We begin with the raw amino-acid sequence, 187 residues long: UPF0232 protein MUL_0004 (187 aa).

Positions 1 to 12 are enriched in gly residues; that stretch reads MNGDGEQPGPGD. Disordered regions lie at residues 1-77 and 166-187; these read MNGD…QPLG and ASPSWRKGPRHIAGRGPRDTYG. Over residues 14–30 the composition is skewed to basic and acidic residues; sequence AARDELPSMDLVRRTLA. Residues 31–55 are compositionally biased toward low complexity; the sequence is EARAAARARGQDPGRGFAAGPAPRR.

Belongs to the UPF0232 family.

The chain is UPF0232 protein MUL_0004 from Mycobacterium ulcerans (strain Agy99).